Consider the following 164-residue polypeptide: MIRKLDDFDIKILDLLQHDATATMAELSEKTGLSANACWRRIRLLEADGVIKNRVTLLDPQKIGLGITVFVCIRCAEHSQDWLDNFLQIVNESPEVIEFYRLAGDIDYLLKLQVASISEYDRLYKKLVSRVKLTDVSAIFSMEELKHSTILPLPETSDKAERKA.

The region spanning 5–66 (LDDFDIKILD…LLDPQKIGLG (62 aa)) is the HTH asnC-type domain. The segment at residues 24–43 (MAELSEKTGLSANACWRRIR) is a DNA-binding region (H-T-H motif).

In terms of biological role, represses the secondary, H(+)-coupled glutamate uptake system (Gluemp) genes. This is Glutamate uptake regulatory protein (grp) from Zymomonas mobilis subsp. mobilis (strain ATCC 31821 / ZM4 / CP4).